Here is a 250-residue protein sequence, read N- to C-terminus: 3-deoxy-manno-octulosonate cytidylyltransferase 1 (250 aa).

Belongs to the KdsB family.

It localises to the cytoplasm. It catalyses the reaction 3-deoxy-alpha-D-manno-oct-2-ulosonate + CTP = CMP-3-deoxy-beta-D-manno-octulosonate + diphosphate. It functions in the pathway nucleotide-sugar biosynthesis; CMP-3-deoxy-D-manno-octulosonate biosynthesis; CMP-3-deoxy-D-manno-octulosonate from 3-deoxy-D-manno-octulosonate and CTP: step 1/1. It participates in bacterial outer membrane biogenesis; lipopolysaccharide biosynthesis. Activates KDO (a required 8-carbon sugar) for incorporation into bacterial lipopolysaccharide in Gram-negative bacteria. In Actinobacillus pleuropneumoniae serotype 5b (strain L20), this protein is 3-deoxy-manno-octulosonate cytidylyltransferase 1.